We begin with the raw amino-acid sequence, 165 residues long: Biosynthetic peptidoglycan transglycosylase (165 aa).

The protein belongs to the glycosyltransferase 51 family.

The protein localises to the cell inner membrane. The enzyme catalyses [GlcNAc-(1-&gt;4)-Mur2Ac(oyl-L-Ala-gamma-D-Glu-L-Lys-D-Ala-D-Ala)](n)-di-trans,octa-cis-undecaprenyl diphosphate + beta-D-GlcNAc-(1-&gt;4)-Mur2Ac(oyl-L-Ala-gamma-D-Glu-L-Lys-D-Ala-D-Ala)-di-trans,octa-cis-undecaprenyl diphosphate = [GlcNAc-(1-&gt;4)-Mur2Ac(oyl-L-Ala-gamma-D-Glu-L-Lys-D-Ala-D-Ala)](n+1)-di-trans,octa-cis-undecaprenyl diphosphate + di-trans,octa-cis-undecaprenyl diphosphate + H(+). It functions in the pathway cell wall biogenesis; peptidoglycan biosynthesis. Peptidoglycan polymerase that catalyzes glycan chain elongation from lipid-linked precursors. The polypeptide is Biosynthetic peptidoglycan transglycosylase (Neisseria meningitidis).